Here is a 179-residue protein sequence, read N- to C-terminus: Large ribosomal subunit protein uL5 (179 aa).

Belongs to the universal ribosomal protein uL5 family. Part of the 50S ribosomal subunit; part of the 5S rRNA/L5/L18/L25 subcomplex. Contacts the 5S rRNA and the P site tRNA. Forms a bridge to the 30S subunit in the 70S ribosome.

In terms of biological role, this is one of the proteins that bind and probably mediate the attachment of the 5S RNA into the large ribosomal subunit, where it forms part of the central protuberance. In the 70S ribosome it contacts protein S13 of the 30S subunit (bridge B1b), connecting the 2 subunits; this bridge is implicated in subunit movement. Contacts the P site tRNA; the 5S rRNA and some of its associated proteins might help stabilize positioning of ribosome-bound tRNAs. The sequence is that of Large ribosomal subunit protein uL5 from Shewanella frigidimarina (strain NCIMB 400).